Reading from the N-terminus, the 330-residue chain is NADH-quinone oxidoreductase subunit H (330 aa).

The next 8 helical transmembrane spans lie at 11-31 (ILVA…CGAL), 81-101 (FIFV…FAII), 114-134 (IGIL…LFAG), 154-174 (ISYE…VGSF), 187-207 (LWFI…GVAV), 238-258 (FFVG…TLFF), 270-290 (QIPF…FILL), and 309-329 (FCLP…LAAA).

Belongs to the complex I subunit 1 family. In terms of assembly, NDH-1 is composed of 13 different subunits. Subunits NuoA, H, J, K, L, M, N constitute the membrane sector of the complex.

It is found in the cell inner membrane. The enzyme catalyses a quinone + NADH + 5 H(+)(in) = a quinol + NAD(+) + 4 H(+)(out). Its function is as follows. NDH-1 shuttles electrons from NADH, via FMN and iron-sulfur (Fe-S) centers, to quinones in the respiratory chain. The immediate electron acceptor for the enzyme in this species is believed to be ubiquinone. Couples the redox reaction to proton translocation (for every two electrons transferred, four hydrogen ions are translocated across the cytoplasmic membrane), and thus conserves the redox energy in a proton gradient. This subunit may bind ubiquinone. The protein is NADH-quinone oxidoreductase subunit H of Ectopseudomonas mendocina (strain ymp) (Pseudomonas mendocina).